The primary structure comprises 1077 residues: Serine/threonine-protein kinase sel-5 (1077 aa).

Residues 47–317 (VTIEKQIAEG…IYQTSVLAFE (271 aa)) enclose the Protein kinase domain. ATP is bound by residues 53 to 61 (IAEGGFAIV) and lysine 75. Residue aspartate 178 is the Proton acceptor of the active site. 4 disordered regions span residues 347–444 (MRDG…TDGS), 488–554 (GFTD…SQVV), 616–813 (ELDS…TNPF), and 920–1077 (LISV…PTDL). A compositionally biased stretch (polar residues) spans 369-399 (IQSSSKMASLSQQVPSISNISMPSGSGTVET). Residues 491 to 515 (DLDKPALPRDRAQTDGKRRLPHESD) show a composition bias toward basic and acidic residues. The segment covering 541–554 (SSQQTTSKTSSQVV) has biased composition (low complexity). Polar residues predominate over residues 638-648 (LTVSTSSSAQP). Positions 655 to 679 (TDEDDERQLLSETDEEEKYEIDEKE) are enriched in acidic residues. Composition is skewed to basic and acidic residues over residues 697-708 (DEQRMNDRRRYS) and 739-751 (DSRRGGDTSHDED). Over residues 770-780 (EDDGLEDDDDH) the composition is skewed to acidic residues. A compositionally biased stretch (polar residues) spans 799–810 (GTSTPHTQNPIT). Residues 927–936 (TDPPPPPLPK) show a composition bias toward pro residues. Polar residues predominate over residues 941 to 950 (ASPTQETTAT). The segment covering 960–969 (KLLKKEKKKE) has biased composition (basic residues). Residues 970–989 (KKDGKKDKLKLEEYREKGSS) are compositionally biased toward basic and acidic residues. Positions 1054-1067 (LTGKNASFVNTSFQ) are enriched in polar residues.

This sequence belongs to the protein kinase superfamily. Ser/Thr protein kinase family. Requires Mg(2+) as cofactor.

Its subcellular location is the cytoplasm. The catalysed reaction is L-seryl-[protein] + ATP = O-phospho-L-seryl-[protein] + ADP + H(+). The enzyme catalyses L-threonyl-[protein] + ATP = O-phospho-L-threonyl-[protein] + ADP + H(+). Serine/threonine-protein kinase which may play a role in lin-12-mediated cell-fate decisions. The chain is Serine/threonine-protein kinase sel-5 from Caenorhabditis elegans.